Here is a 281-residue protein sequence, read N- to C-terminus: Pantothenate synthetase (281 aa).

ATP is bound at residue 31-38 (MGNLHAGH). The Proton donor role is filled by His38. Position 62 (Gln62) interacts with (R)-pantoate. Gln62 provides a ligand contact to beta-alanine. 150–153 (GKKD) provides a ligand contact to ATP. Gln156 lines the (R)-pantoate pocket. Residues Val179 and 187–190 (MSSR) each bind ATP.

It belongs to the pantothenate synthetase family. In terms of assembly, homodimer.

It localises to the cytoplasm. The catalysed reaction is (R)-pantoate + beta-alanine + ATP = (R)-pantothenate + AMP + diphosphate + H(+). The protein operates within cofactor biosynthesis; (R)-pantothenate biosynthesis; (R)-pantothenate from (R)-pantoate and beta-alanine: step 1/1. Its function is as follows. Catalyzes the condensation of pantoate with beta-alanine in an ATP-dependent reaction via a pantoyl-adenylate intermediate. This chain is Pantothenate synthetase, found in Xylella fastidiosa (strain M23).